The chain runs to 206 residues: Protein phosphatase inhibitor 2 (206 aa).

The tract at residues M1–I36 is disordered. A2 bears the N-acetylalanine mark. The tract at residues K12–N17 is required for binding PPP1CC. The required for binding the 'RVXF' binding groove of PPP1CC stretch occupies residues K44–T56. S45 carries the phosphoserine; by ATM modification. The residue at position 74 (T74) is a Phosphothreonine. A disordered region spans residues P75–M143. A compositionally biased stretch (acidic residues) spans G81–G92. A phosphoserine mark is found at S88 and S90. Residues T97 and T117 each carry the phosphothreonine modification. Over residues S111–E121 the composition is skewed to basic and acidic residues. Phosphoserine is present on residues S122, S123, and S131. Acidic residues predominate over residues S122 to S131. The span at P132–M143 shows a compositional bias: basic and acidic residues. The required for binding PPP1CC catalytic center, displacing metal ions and inhibition of PPP1CC catalytic activity stretch occupies residues H148–E151. The disordered stretch occupies residues K164–S206. The segment covering D168–D180 has biased composition (acidic residues). Residues V186–S206 show a composition bias toward polar residues.

This sequence belongs to the protein phosphatase inhibitor 2 family. In terms of assembly, heterodimer with PP1. In terms of processing, phosphorylation on Ser-45 by ATM activates PP1 by dissociating the PP1-PPP1R2 complex. Phosphorylation on Thr-74 by GSK3 activates PP1 by dissociating the PP1-PPP1R2 complex.

Its function is as follows. Inhibitor of protein-phosphatase 1. This chain is Protein phosphatase inhibitor 2 (Ppp1r2), found in Mus musculus (Mouse).